Here is a 2089-residue protein sequence, read N- to C-terminus: Rho GTPase-activating protein 32 (2089 aa).

The interval Thr24 to Phe52 is disordered. The region spanning Gly131–Gly245 is the PX; atypical domain. Residues Pro259 to Gln321 enclose the SH3 domain. The region spanning Cys372–Phe567 is the Rho-GAP domain. 4 positions are modified to phosphoserine: Ser706, Ser709, Ser732, and Ser738. A compositionally biased stretch (basic and acidic residues) spans Lys828–Glu837. The disordered stretch occupies residues Lys828–Val858. Residues Gly840–Pro854 show a composition bias toward polar residues. Phosphoserine occurs at positions 852, 856, 892, and 952. Disordered stretches follow at residues Gln955–Pro1037, Cys1119–Gly1141, and Leu1154–Thr1197. 2 stretches are compositionally biased toward polar residues: residues Leu998 to Ala1014 and Pro1132 to Gly1141. Residues Asp1175–Gly1191 are compositionally biased toward basic and acidic residues. Ser1206 is modified (phosphoserine). Positions Gly1221 to Asp1368 are disordered. Residues Asp1225 to Asp1235 show a composition bias toward basic and acidic residues. Residues Thr1262–Ala1275 are compositionally biased toward low complexity. The segment at Arg1395–Pro1714 is interaction with GAB2. Asymmetric dimethylarginine occurs at positions 1526 and 1536. Ser1588 carries the post-translational modification Phosphoserine. The segment at Ser1688–Glu2089 is interaction with FYN. Disordered stretches follow at residues Pro1801–Leu1865 and Arg1881–Asp2002. Residues Gly1826 to Arg1841 are compositionally biased toward basic and acidic residues. Over residues Ser1850–Leu1865 the composition is skewed to polar residues. Over residues Arg1881–Cys1892 the composition is skewed to basic and acidic residues. The span at Ser1918 to Leu1939 shows a compositional bias: polar residues. Basic and acidic residues-rich tracts occupy residues Asn1940–Arg1954 and Pro1961–Phe1975. Arg2039 carries the post-translational modification Omega-N-methylarginine.

This sequence belongs to the PX domain-containing GAP family. Interacts with NTRK1 (via cytoplasmic domain); the interaction is independent of the phosphorylation state of NTRK1. Interacts with SHC3 (via SH2 domain). Interacts with RASA1 (via SH3 domain); the interaction is necessary for the Ras activation and cell transforming activities of ARHGAP32. Interacts with GAB1 and GAB2. Interacts with CRK and CRKL. Found in a complex with CRKL and BCAR1; upon EGF stimulation BCAR1 may be replaced by EGFR. Interacts with NCK1 (via SH3 domain); NCK1 recruits phosphorylated BCAR1 to the complex. Isoform 2 interacts with FYN; the interaction appears to be dependent on tyrosine phosphorylation of ARHGAP32. Interacts with EGFR; the interaction requires EGF stimulation and is increased by SHC3. Interacts with CDC42; the interaction requires constitutively active CDC42. Interacts with CTNNB1, DLG4, CDH2 and GRIN2B. Interacts with GPHN. Isoform 2 is phosphorylated on multiple tyrosine residues by FYN. Phosphorylated tyrosine residues undergo dephosphorylation after stimulation of NMDA receptors. Phosphorylated in vitro by CaMK2 in the presence of calmodulin and calcium; which inhibits GAP activity. In terms of tissue distribution, isoform 1 and isoform 2 are highly expressed in brain, specially in cortex, corpus striatum, hippocampus and thalamus. Low levels in cerebellum, colon, small intestine, and kidney.

It is found in the postsynaptic density. The protein localises to the cell projection. Its subcellular location is the dendritic spine. The protein resides in the cytoplasm. It localises to the cell cortex. It is found in the endosome membrane. The protein localises to the golgi apparatus membrane. Its subcellular location is the endoplasmic reticulum membrane. The protein resides in the membrane. Functionally, GTPase-activating protein (GAP) promoting GTP hydrolysis on RHOA, CDC42 and RAC1 small GTPases. May be involved in the differentiation of neuronal cells during the formation of neurite extensions. Involved in NMDA receptor activity-dependent actin reorganization in dendritic spines. May mediate cross-talks between Ras- and Rho-regulated signaling pathways in cell growth regulation. Isoform 2 has higher GAP activity. The chain is Rho GTPase-activating protein 32 (Arhgap32) from Mus musculus (Mouse).